The chain runs to 374 residues: Putative heme chaperone HemW-like protein (374 aa).

In terms of domain architecture, Radical SAM core spans 1 to 231; it reads MKLLGLYINI…EKLLKKSGYK (231 aa).

The protein belongs to the anaerobic coproporphyrinogen-III oxidase family. HemW subfamily.

The protein localises to the cytoplasm. Might be a heme chaperone; in E.coli heme binds independently of binding to [4Fe-4S] or S-adenosyl-L-methionine. The polypeptide is Putative heme chaperone HemW-like protein (Buchnera aphidicola subsp. Baizongia pistaciae (strain Bp)).